The chain runs to 494 residues: Tripartite motif-containing protein 5 (494 aa).

The residue at position 2 (alanine 2) is an N-acetylalanine. The RING-type zinc-finger motif lies at 15–59; it reads CPICLELLTQPLSLDCGHSFCQACLTANHKTSMPDEGERSCPVCR. Phosphoserine is present on serine 86. Residues 91–133 form a B box-type zinc finger; it reads QKVDHCARHGEKLLLFCQEDRKVICWLCERSQEHRGHHTFLTE. Residues cysteine 96, histidine 99, cysteine 118, and histidine 124 each coordinate Zn(2+). Residues 132-241 are a coiled coil; sequence TEEVAQEYQV…LISDLEHRLQ (110 aa). Residues 186–199 are required for interaction with GABARAP and for autophagy; sequence FEQLRHILDWVESN. One can recognise a B30.2/SPRY domain in the interval 282 to 494; that stretch reads LKVMLEVLRE…VPMTLCSPSS (213 aa).

Belongs to the TRIM/RBCC family. As to quaternary structure, can form homodimers and homotrimers. In addition to lower-order dimerization, also exhibits a higher-order multimerization and both low- and high-order multimerizations are essential for its restriction activity. Interacts with BTBD1 and BTBD2. Interacts with PSMC4, PSMC5, PSMD7 and HSPA8/HSC70. Interacts (via B30.2/SPRY domain) with HSPA1A/B. Interacts with PSMC2, MAP3K7/TAK1, TAB2 and TAB3. Interacts with SQSTM1. Interacts with TRIM6 and TRIM34. Interacts with ULK1 (phosphorylated form), GABARAP, GABARAPL1, GABARAPL2, MAP1LC3A, MAP1LC3C and BECN1. Post-translationally, degraded in a proteasome-independent fashion in the absence of viral infection but in a proteasome-dependent fashion following exposure to restriction sensitive virus. In terms of processing, autoubiquitinated in a RING finger- and UBE2D2-dependent manner. Monoubiquitinated by TRIM21. Deubiquitinated by Yersinia YopJ. Ubiquitination may not lead to proteasomal degradation.

The protein resides in the cytoplasm. It is found in the nucleus. It carries out the reaction S-ubiquitinyl-[E2 ubiquitin-conjugating enzyme]-L-cysteine + [acceptor protein]-L-lysine = [E2 ubiquitin-conjugating enzyme]-L-cysteine + N(6)-ubiquitinyl-[acceptor protein]-L-lysine.. It functions in the pathway protein modification; protein ubiquitination. Functionally, capsid-specific restriction factor that prevents infection from non-host-adapted retroviruses. Blocks viral replication early in the life cycle, after viral entry but before reverse transcription. In addition to acting as a capsid-specific restriction factor, also acts as a pattern recognition receptor that activates innate immune signaling in response to the retroviral capsid lattice. Binding to the viral capsid triggers its E3 ubiquitin ligase activity, and in concert with the heterodimeric ubiquitin conjugating enzyme complex UBE2V1-UBE2N (also known as UBC13-UEV1A complex) generates 'Lys-63'-linked polyubiquitin chains, which in turn are catalysts in the autophosphorylation of the MAP3K7/TAK1 complex (includes TAK1, TAB2, and TAB3). Activation of the MAP3K7/TAK1 complex by autophosphorylation results in the induction and expression of NF-kappa-B and MAPK-responsive inflammatory genes, thereby leading to an innate immune response in the infected cell. Plays a role in regulating autophagy through activation of autophagy regulator BECN1 by causing its dissociation from its inhibitors BCL2 and TAB2. This is Tripartite motif-containing protein 5 (TRIM5) from Symphalangus syndactylus (Siamang).